We begin with the raw amino-acid sequence, 307 residues long: Ribosomal RNA small subunit methyltransferase H (307 aa).

S-adenosyl-L-methionine contacts are provided by residues 34–36 (GGH), D53, L88, D102, and Q109.

The protein belongs to the methyltransferase superfamily. RsmH family.

The protein localises to the cytoplasm. It carries out the reaction cytidine(1402) in 16S rRNA + S-adenosyl-L-methionine = N(4)-methylcytidine(1402) in 16S rRNA + S-adenosyl-L-homocysteine + H(+). Its function is as follows. Specifically methylates the N4 position of cytidine in position 1402 (C1402) of 16S rRNA. This Sulfurimonas denitrificans (strain ATCC 33889 / DSM 1251) (Thiomicrospira denitrificans (strain ATCC 33889 / DSM 1251)) protein is Ribosomal RNA small subunit methyltransferase H.